A 321-amino-acid chain; its full sequence is MSSSELIAELERERDRRVLSIQSHVVHGYAGNKCSVFPLQLHGFEVDFINSVQFSNHAGNIEYLTLPTRYEHVKGQKLTEKELEELYEGLTLNNINNYTHVLTGYCGNVTFLQKIADVVKDLKKKNGNTTFVCDPVMGDNGRYYTPKELMPVYRDLIIPLADVLTPNAFELGELTGSPIETEEDCLRAVNELHAKGVKTVVVTSGVTGAQTNESLRCYASVKGSHVYRFTFPRLVGQFVGTGDTFTSLLVVWLDELNGDVSEAVKRVLASMQCLIRKTSSYAQLQVDTNSRAMCELRLIQSRKDLLWPPTCDQIQVEKIGQ.

Substrate contacts are provided by Ser-23 and Tyr-144. Residues 203–204 (TS) and 230–242 (TFPR…VGTG) each bind ATP. Asp-243 lines the substrate pocket.

Belongs to the pyridoxine kinase family. Zn(2+) is required as a cofactor. The cofactor is Mg(2+).

It catalyses the reaction pyridoxal + ATP = pyridoxal 5'-phosphate + ADP + H(+). Functionally, required for synthesis of pyridoxal-5-phosphate from vitamin B6. The chain is Putative pyridoxal kinase from Caenorhabditis elegans.